We begin with the raw amino-acid sequence, 197 residues long: Peptide deformylase (197 aa).

The Fe cation site is built by Cys106 and His148. The active site involves Glu149. His152 provides a ligand contact to Fe cation.

Belongs to the polypeptide deformylase family. Fe(2+) serves as cofactor.

It catalyses the reaction N-terminal N-formyl-L-methionyl-[peptide] + H2O = N-terminal L-methionyl-[peptide] + formate. Its function is as follows. Removes the formyl group from the N-terminal Met of newly synthesized proteins. Requires at least a dipeptide for an efficient rate of reaction. N-terminal L-methionine is a prerequisite for activity but the enzyme has broad specificity at other positions. The polypeptide is Peptide deformylase (Mycobacterium bovis (strain ATCC BAA-935 / AF2122/97)).